The chain runs to 2079 residues: von Willebrand factor A domain-containing protein DDB_G0286969 (2079 aa).

The 137-residue stretch at 11 to 147 (EQILPSFISI…ELEIIITYST (137 aa)) folds into the VIT domain. A disordered region spans residues 178–203 (NENSTTNTNTQTQPQSVNTTTTTTPS). Over residues 180 to 203 (NSTTNTNTQTQPQSVNTTTTTTPS) the composition is skewed to low complexity. The VWFA domain maps to 354–525 (ELIFLVDVSE…KVMRQLKRAL (172 aa)). 5 disordered regions span residues 761-800 (PTTL…LKTP), 832-866 (PFVP…TEVK), 956-1139 (AKPV…TKPT), 1155-1203 (NEPA…VSST), and 1239-1294 (DSNT…ADAE). Composition is skewed to low complexity over residues 785 to 800 (TTQQ…LKTP), 841 to 866 (PTTT…TEVK), and 956 to 973 (AKPV…QQTK). The stretch at 923-957 (EMIKIAEAKAAAEQKAAAEQKAIADAKAAAEQAAK) forms a coiled coil. Residues 974–989 (PKADKQSKQNAKDNKQ) show a composition bias toward basic and acidic residues. Low complexity predominate over residues 992–1006 (KPVVVEQKPPVVTET). Residues 1007 to 1021 (KPTVATESATPTKPT) are compositionally biased toward polar residues. The segment covering 1023–1061 (AQAAAAAAAAAQQAAQQAAATTPVKQQPTKQTTPNKSTP) has biased composition (low complexity). The span at 1092 to 1111 (KPVETKPVEQTKPVETKPVE) shows a compositional bias: basic and acidic residues. Over residues 1176 to 1198 (NNNNNNNNNNNNNNNNNNNNNNN) the composition is skewed to low complexity. The span at 1239–1272 (DSNTKAPDSLKTTPIFSNGPQGISPSSGNGSNKS) shows a compositional bias: polar residues. A compositionally biased stretch (basic and acidic residues) spans 1280-1292 (DRGGRGGRDRNAD). The MIF4G domain maps to 1317 to 1527 (LKKFKFNLNR…LDLIDLRANK (211 aa)). The segment at 1530-1755 (PKNSTQTKTK…PAPVEPVKPK (226 aa)) is disordered. Composition is skewed to basic and acidic residues over residues 1538 to 1550 (TKKD…ERFI), 1557 to 1599 (QKRE…RDAP), and 1621 to 1634 (NNRD…DRSG). Low complexity-rich tracts occupy residues 1635–1659 (GKQS…LFGS) and 1688–1699 (SSSIPSIPNRSN). The segment covering 1725–1740 (SNDRDSRGPSKPDNRK) has biased composition (basic and acidic residues). The MI domain occupies 1760 to 1882 (KIEDDISMTL…PLNYLEEAYA (123 aa)).

In Dictyostelium discoideum (Social amoeba), this protein is von Willebrand factor A domain-containing protein DDB_G0286969.